The chain runs to 787 residues: Integrin beta-6 (787 aa).

The signal sequence occupies residues 1–21 (MGIELLCLFFLFLGRNDHVQG). The 50-residue stretch at 22-71 (GCAMGGAETCEDCLLIGPQCAWCSQENFTHLSGVGERCDTPANLLAKGCQ) folds into the PSI domain. At 22-708 (GCAMGGAETC…KDCPKPPNIP (687 aa)) the chain is on the extracellular side. 19 disulfides stabilise this stretch: Cys-23/Cys-41, Cys-31/Cys-454, Cys-34/Cys-59, Cys-44/Cys-70, Cys-197/Cys-204, Cys-252/Cys-293, Cys-394/Cys-406, Cys-426/Cys-452, Cys-456/Cys-476, Cys-467/Cys-479, Cys-481/Cys-490, Cys-492/Cys-519, Cys-502/Cys-517, Cys-511/Cys-522, Cys-524/Cys-537, Cys-539/Cys-560, Cys-544/Cys-558, Cys-552/Cys-563, and Cys-565/Cys-574. 2 N-linked (GlcNAc...) asparagine glycosylation sites follow: Asn-48 and Asn-97. Positions 131 to 371 (YPVDLYYLMD…QLIISAYEEL (241 aa)) constitute a VWFA domain. The Mg(2+) site is built by Asp-140, Ser-142, and Ser-144. Ser-144, Asp-147, Asp-148, and Glu-179 together coordinate Ca(2+). Ca(2+) contacts are provided by Asn-235, Asp-237, Pro-239, and Glu-240. Glu-240 serves as a coordination point for Mg(2+). The N-linked (GlcNAc...) asparagine glycan is linked to Asn-260. Ca(2+)-binding residues include Asp-271 and Lys-355. Asn-387 carries N-linked (GlcNAc...) asparagine glycosylation. N-linked (GlcNAc...) asparagine glycosylation occurs at Asn-418. I-EGF domains are found at residues 456-491 (CQKEVEVNSSKCSNGNGSFQCGVCACNPGHVGHHCE), 492-538 (CGED…PYCQ), 539-575 (CDNFSCVRHKGLLCGDNGDCDCGECVCRSGWTGEYCN), and 576-615 (CTTSTDPCVSEDGILCSGRGDCVCGKCICTNPGASGPACE). Asn-463 and Asn-471 each carry an N-linked (GlcNAc...) asparagine glycan. The N-linked (GlcNAc...) asparagine glycan is linked to Asn-541. An N-linked (GlcNAc...) asparagine glycan is attached at Asn-575. Cystine bridges form between Cys-576–Cys-599, Cys-583–Cys-597, Cys-591–Cys-602, Cys-604–Cys-614, Cys-617–Cys-620, Cys-624–Cys-670, Cys-630–Cys-649, Cys-633–Cys-645, and Cys-678–Cys-701. A helical membrane pass occupies residues 709–729 (MIMLGVSLAILLIGVALLCIW). Positions 730–757 (KLLVSFHDRKEVAKFEAERSKAKWQTGT) are interaction with HAX1. Topologically, residues 730–787 (KLLVSFHDRKEVAKFEAERSKAKWQTGTNPLYRGSTSTFKNVTYKHKEKQKVDLSTDG) are cytoplasmic.

Belongs to the integrin beta chain family. As to quaternary structure, heterodimer of an alpha and a beta subunit. Interacts with FLNB. Interacts with HAX1. ITGAV:ITGB6 interacts with FBN1. ITGAV:ITGB6 interacts with TGFB1.

It localises to the cell membrane. The protein localises to the cell junction. Its subcellular location is the focal adhesion. Its function is as follows. Integrin alpha-V:beta-6 (ITGAV:ITGB6) is a receptor for fibronectin and cytotactin. It recognizes the sequence R-G-D in its ligands. ITGAV:ITGB6 acts as a receptor for fibrillin-1 (FBN1) and mediates R-G-D-dependent cell adhesion to FBN1. Integrin alpha-V:beta-6 (ITGAV:ITGB6) mediates R-G-D-dependent release of transforming growth factor beta-1 (TGF-beta-1) from regulatory Latency-associated peptide (LAP), thereby playing a key role in TGF-beta-1 activation. The chain is Integrin beta-6 (ITGB6) from Ovis aries (Sheep).